The primary structure comprises 154 residues: MRRYAALMVIDAVLLSTSQALSSSHASELRSQLSAADAMFPSAERDGGIPNKRSLRRISVTESNDGERDEERGFQISILTKLQKWATKMKLPKTTKNLQFRIWPKEKKDPKAVYAELKLAGLDPKAAKANPEFADYLAYSKIWNHRGGRYMTRS.

The first 20 residues, 1-20, serve as a signal peptide directing secretion; that stretch reads MRRYAALMVIDAVLLSTSQA. The interval 42 to 70 is disordered; it reads SAERDGGIPNKRSLRRISVTESNDGERDE. The RxLR-dEER signature appears at 53–72; it reads RSLRRISVTESNDGERDEER.

Belongs to the RxLR effector family.

The protein resides in the secreted. The protein localises to the host cell. Secreted effector that is involved in host plant infection. Increases the susceptibility to P.infestans and reduces the plant growth. Affects the expression of host genes. This chain is Secreted RxLR effector protein PITG_21681, found in Phytophthora infestans (strain T30-4) (Potato late blight agent).